The chain runs to 53 residues: Alpha-1-antiproteinase 1 (53 aa).

Residues 1-28 (EDLQGDAVPETSATKDDNEXPEMIPMSL) are disordered.

The protein belongs to the serpin family. In terms of processing, N-glycosylated; contains biantennary glycans. In terms of tissue distribution, plasma.

Its subcellular location is the secreted. This is Alpha-1-antiproteinase 1 from Equus caballus (Horse).